We begin with the raw amino-acid sequence, 387 residues long: Putative glutamate--cysteine ligase 2 (387 aa).

It belongs to the glutamate--cysteine ligase type 2 family. YbdK subfamily.

The catalysed reaction is L-cysteine + L-glutamate + ATP = gamma-L-glutamyl-L-cysteine + ADP + phosphate + H(+). ATP-dependent carboxylate-amine ligase which exhibits weak glutamate--cysteine ligase activity. The sequence is that of Putative glutamate--cysteine ligase 2 from Pseudomonas fluorescens (strain ATCC BAA-477 / NRRL B-23932 / Pf-5).